The chain runs to 321 residues: Glycerol-3-phosphate phosphatase (321 aa).

Aspartate 34 functions as the Nucleophile in the catalytic mechanism. Mg(2+)-binding residues include aspartate 34, aspartate 36, and aspartate 260. Aspartate 36 serves as the catalytic Proton donor.

Belongs to the HAD-like hydrolase superfamily. CbbY/CbbZ/Gph/YieH family. Homodimer. Requires Mg(2+) as cofactor. As to expression, ubiquitously expressed with higher expression in testis, heart, skeletal muscle and islet tissue (at protein level).

The catalysed reaction is O-phospho-L-tyrosyl-[protein] + H2O = L-tyrosyl-[protein] + phosphate. The enzyme catalyses sn-glycerol 1-phosphate + H2O = glycerol + phosphate. It catalyses the reaction sn-glycerol 3-phosphate + H2O = glycerol + phosphate. With respect to regulation, inhibited by orthovanadate, beryllium trifluoride, Ca(2+) and EDTA. In terms of biological role, glycerol-3-phosphate phosphatase hydrolyzing glycerol-3-phosphate into glycerol. Thereby, regulates the cellular levels of glycerol-3-phosphate a metabolic intermediate of glucose, lipid and energy metabolism. Was also shown to have a 2-phosphoglycolate phosphatase activity and a tyrosine-protein phosphatase activity. However, their physiological relevance is unclear. In vitro, also has a phosphatase activity toward ADP, ATP, GDP and GTP. The sequence is that of Glycerol-3-phosphate phosphatase from Mus musculus (Mouse).